The chain runs to 264 residues: Thymidylate synthase (264 aa).

Arg-21 serves as a coordination point for dUMP. A (6R)-5,10-methylene-5,6,7,8-tetrahydrofolate-binding site is contributed by His-51. Residue 126–127 (RR) participates in dUMP binding. Cys-146 serves as the catalytic Nucleophile. Residues 166–169 (RSCD), Asn-177, and 207–209 (HLY) contribute to the dUMP site. Asp-169 is a (6R)-5,10-methylene-5,6,7,8-tetrahydrofolate binding site. Ala-263 lines the (6R)-5,10-methylene-5,6,7,8-tetrahydrofolate pocket.

It belongs to the thymidylate synthase family. Bacterial-type ThyA subfamily. In terms of assembly, homodimer.

Its subcellular location is the cytoplasm. It catalyses the reaction dUMP + (6R)-5,10-methylene-5,6,7,8-tetrahydrofolate = 7,8-dihydrofolate + dTMP. The protein operates within pyrimidine metabolism; dTTP biosynthesis. Its function is as follows. Catalyzes the reductive methylation of 2'-deoxyuridine-5'-monophosphate (dUMP) to 2'-deoxythymidine-5'-monophosphate (dTMP) while utilizing 5,10-methylenetetrahydrofolate (mTHF) as the methyl donor and reductant in the reaction, yielding dihydrofolate (DHF) as a by-product. This enzymatic reaction provides an intracellular de novo source of dTMP, an essential precursor for DNA biosynthesis. The protein is Thymidylate synthase of Escherichia fergusonii (strain ATCC 35469 / DSM 13698 / CCUG 18766 / IAM 14443 / JCM 21226 / LMG 7866 / NBRC 102419 / NCTC 12128 / CDC 0568-73).